A 1050-amino-acid chain; its full sequence is Atrial natriuretic peptide receptor 2 (1050 aa).

The first 19 residues, 1–19, serve as a signal peptide directing secretion; the sequence is MDLGHSLFVVFTCFLMARC. The Extracellular segment spans residues 20–460; it reads RTEIGKNITV…FCNEDQLPVL (441 aa). N-linked (GlcNAc...) asparagine glycosylation is found at asparagine 26 and asparagine 74. A disulfide bond links cysteine 84 and cysteine 110. N-linked (GlcNAc...) asparagine glycans are attached at residues asparagine 169, asparagine 203, asparagine 285, asparagine 352, asparagine 366, and asparagine 415. Cysteine 236 and cysteine 339 are disulfide-bonded. The helical transmembrane segment at 461–481 threads the bilayer; it reads GIVAVGSGLALIIFGISSFLI. At 482-1050 the chain is on the cytoplasmic side; that stretch reads YRKLKLEKEL…LGEKTDVYVI (569 aa). A Protein kinase domain is found at 517–790; sequence SRLTISQRGS…PDFSYIKIFV (274 aa). The Guanylate cyclase domain maps to 865 to 995; the sequence is TIYFSDIVGF…DTVNTASRME (131 aa).

It belongs to the adenylyl cyclase class-4/guanylyl cyclase family. Post-translationally, phosphorylated. Phosphorylation of the protein kinase-like domain is required for full activation by CNP. In terms of processing, glycosylated. High levels found in liver, atrium and gill. Moderate levels found in brain and ventricle, and low levels in esophageal sphincter, stomach, posterior intestine and kidney.

It is found in the cell membrane. It carries out the reaction GTP = 3',5'-cyclic GMP + diphosphate. Its function is as follows. Receptor for the C-type natriuretic peptide NPPC/CNP hormone. Has guanylate cyclase activity upon binding of its ligand. May play a role in the regulation of skeletal growth. This is Atrial natriuretic peptide receptor 2 (npr2) from Anguilla japonica (Japanese eel).